We begin with the raw amino-acid sequence, 391 residues long: Processive diacylglycerol beta-glucosyltransferase (391 aa).

The protein belongs to the glycosyltransferase 28 family. UgtP subfamily.

It localises to the cell membrane. It catalyses the reaction a 1,2-diacyl-3-O-(beta-D-glucopyranosyl)-sn-glycerol + UDP-alpha-D-glucose = a 1,2-diacyl-3-O-(beta-D-Glc-(1-&gt;6)-beta-D-Glc)-sn-glycerol + UDP + H(+). It carries out the reaction a 1,2-diacyl-sn-glycerol + UDP-alpha-D-glucose = a 1,2-diacyl-3-O-(beta-D-glucopyranosyl)-sn-glycerol + UDP + H(+). It functions in the pathway glycolipid metabolism; diglucosyl-diacylglycerol biosynthesis. Processive glucosyltransferase involved in the biosynthesis of both the bilayer- and non-bilayer-forming membrane glucolipids. Is able to successively transfer two glucosyl residues to diacylglycerol (DAG), thereby catalyzing the formation of beta-monoglucosyl-DAG (3-O-(beta-D-glucopyranosyl)-1,2-diacyl-sn-glycerol) and beta-diglucosyl-DAG (3-O-(beta-D-glucopyranosyl-beta-(1-&gt;6)-D-glucopyranosyl)-1,2-diacyl-sn-glycerol). Beta-diglucosyl-DAG is the predominant glycolipid found in Bacillales and is also used as a membrane anchor for lipoteichoic acid (LTA). This is Processive diacylglycerol beta-glucosyltransferase from Staphylococcus aureus (strain MW2).